Reading from the N-terminus, the 406-residue chain is Vacuole membrane protein 1 (406 aa).

Basic and acidic residues predominate over residues 1–20; the sequence is MAENGKNCDQRRIAMSKDQH. Residues 1–37 form a disordered region; it reads MAENGKNCDQRRIAMSKDQHNGSLTDPSSVHEKKRRD. Alanine 2 is subject to N-acetylalanine. The Cytoplasmic portion of the chain corresponds to 2 to 77; that stretch reads AENGKNCDQR…WTSKLWHRQS (76 aa). The chain crosses the membrane as a helical span at residues 78 to 98; that stretch reads IVVSFLLLLAALVATYYVEGA. The Extracellular segment spans residues 99–109; the sequence is HQQYVQRIEKQ. The chain crosses the membrane as a helical span at residues 110 to 130; it reads FLLYAYWIGLGILSSVGLGTG. The Cytoplasmic portion of the chain corresponds to 131–250; that stretch reads LHTFLLYLGP…ASRAKLAVQK (120 aa). Residues 173 to 316 form a VTT domain region; that stretch reads GAEGAISLWS…FVIVTFSKHI (144 aa). The helical transmembrane segment at 251-271 threads the bilayer; sequence LVQKVGFFGILACASIPNPLF. Over 272 to 273 the chain is Extracellular; sequence DL. The helical transmembrane segment at 274–294 threads the bilayer; sequence AGITCGHFLVPFWTFFGATLI. Residues 295-305 lie on the Cytoplasmic side of the membrane; sequence GKAIIKMHIQK. A helical transmembrane segment spans residues 306–326; that stretch reads IFVIVTFSKHIVEQMVTFIGA. At 327-363 the chain is on the extracellular side; that stretch reads VPGIGPSLQKPFQEYLEAQRQKLHHRSEAGTPQGENW. The helical transmembrane segment at 364 to 384 threads the bilayer; that stretch reads LSWMFEKLVVAMVCYFVLSII. The Cytoplasmic portion of the chain corresponds to 385–406; that stretch reads NSMAQNYAKRIQQRLNSEEKTK.

Belongs to the VMP1 family. In terms of assembly, interacts with BECN1. Interacts with TJP1. Interacts with TP53INP2. Interacts with TMEM41B. Interacts with ATP2A2, PLN and SLN; competes with PLN and SLN to prevent them from forming an inhibitory complex with ATP2A2. Interacts with ATG2A.

Its subcellular location is the endoplasmic reticulum-Golgi intermediate compartment membrane. It is found in the cell membrane. The protein resides in the vacuole membrane. The protein localises to the endoplasmic reticulum membrane. It catalyses the reaction a 1,2-diacyl-sn-glycero-3-phospho-L-serine(in) = a 1,2-diacyl-sn-glycero-3-phospho-L-serine(out). The catalysed reaction is cholesterol(in) = cholesterol(out). It carries out the reaction a 1,2-diacyl-sn-glycero-3-phosphocholine(in) = a 1,2-diacyl-sn-glycero-3-phosphocholine(out). The enzyme catalyses a 1,2-diacyl-sn-glycero-3-phosphoethanolamine(in) = a 1,2-diacyl-sn-glycero-3-phosphoethanolamine(out). Phospholipid scramblase involved in lipid homeostasis and membrane dynamics processes. Has phospholipid scramblase activity toward cholesterol and phosphatidylserine, as well as phosphatidylethanolamine and phosphatidylcholine. Required for autophagosome formation: participates in early stages of autophagosome biogenesis at the endoplasmic reticulum (ER) membrane by reequilibrating the leaflets of the ER as lipids are extracted by ATG2 (ATG2A or ATG2B) to mediate autophagosome assembly. Regulates ATP2A2 activity to control ER-isolation membrane contacts for autophagosome formation. In addition to autophagy, involved in other processes in which phospholipid scramblase activity is required. Modulates ER contacts with lipid droplets, mitochondria and endosomes. Plays an essential role in formation of cell junctions. Upon stress such as bacterial and viral infection, promotes formation of cytoplasmic vacuoles followed by cell death. Involved in the cytoplasmic vacuolization of acinar cells during the early stage of acute pancreatitis. This Mus musculus (Mouse) protein is Vacuole membrane protein 1.